Consider the following 188-residue polypeptide: Small acidic protein (188 aa).

The tract at residues 1 to 188 is disordered; the sequence is MSAREERYQR…KMLFVKSTGS (188 aa). Residues 49 to 82 show a composition bias toward basic and acidic residues; that stretch reads GKKEHTGRLVIGDHKSTSHFRSGVEDKKISDQLE. Residues 83–95 are compositionally biased toward polar residues; it reads HQYQQSMDSSMSG. Residues 130-152 are compositionally biased toward acidic residues; that stretch reads SESSNEVSSEEESESESVSEEET. Over residues 153–176 the composition is skewed to basic and acidic residues; that stretch reads AADKQKPTKPNEKDSFPDSRDGKS.

Belongs to the SMAP family.

The chain is Small acidic protein (smap) from Xenopus laevis (African clawed frog).